The sequence spans 432 residues: Adenylosuccinate synthetase (432 aa).

GTP is bound by residues 13–19 (GDEGKGK) and 41–43 (GHT). The Proton acceptor role is filled by aspartate 14. Aspartate 14 and glycine 41 together coordinate Mg(2+). Residues 14-17 (DEGK), 39-42 (NAGH), threonine 130, arginine 144, glutamine 225, threonine 240, and arginine 304 each bind IMP. Histidine 42 serves as the catalytic Proton donor. Position 300–306 (300–306 (ATTGRRR)) interacts with substrate. GTP-binding positions include arginine 306, 332–334 (KLD), and 415–417 (STG).

Belongs to the adenylosuccinate synthetase family. As to quaternary structure, homodimer. Mg(2+) serves as cofactor.

It localises to the cytoplasm. It catalyses the reaction IMP + L-aspartate + GTP = N(6)-(1,2-dicarboxyethyl)-AMP + GDP + phosphate + 2 H(+). The protein operates within purine metabolism; AMP biosynthesis via de novo pathway; AMP from IMP: step 1/2. Its function is as follows. Plays an important role in the de novo pathway of purine nucleotide biosynthesis. Catalyzes the first committed step in the biosynthesis of AMP from IMP. The protein is Adenylosuccinate synthetase of Salmonella choleraesuis (strain SC-B67).